Consider the following 375-residue polypeptide: Ketohexokinase (375 aa).

Asp319 serves as a coordination point for beta-D-fructose.

It belongs to the carbohydrate kinase PfkB family. Homodimer.

The catalysed reaction is beta-D-fructose + ATP = beta-D-fructose 1-phosphate + ADP + H(+). It participates in carbohydrate metabolism; fructose metabolism. With respect to regulation, activated in the presence of 0.5 M KCl. 85% activity at 3.5 M KCl. 60% activity without KCl. In terms of biological role, catalyzes the ATP-dependent phosphorylation of the ketose sugar fructose to fructose-1-phosphate. Does not produce fructose-6-phosphate. The sugars D-glucose, D-galactose, L-rhamnose, D-xylose, L-arabinose and D-ribose are not substrates of this enzyme. The chain is Ketohexokinase from Haloferax volcanii (strain ATCC 29605 / DSM 3757 / JCM 8879 / NBRC 14742 / NCIMB 2012 / VKM B-1768 / DS2) (Halobacterium volcanii).